Consider the following 510-residue polypeptide: Beta-glucosidase 12 (510 aa).

Residues 1–24 (MAAAGAMPGGLLLTFLLLAVVASG) form the signal peptide. Q53 serves as a coordination point for a beta-D-glucoside. N-linked (GlcNAc...) asparagine glycosylation occurs at N122. A beta-D-glucoside-binding positions include H157 and 202–203 (NE). E203 functions as the Proton donor in the catalytic mechanism. 2 disulfides stabilise this stretch: C208-C243 and C222-C230. N229 carries an N-linked (GlcNAc...) asparagine glycan. Y346 provides a ligand contact to a beta-D-glucoside. N-linked (GlcNAc...) asparagine glycosylation is found at N361 and N371. Residue E417 coordinates a beta-D-glucoside. Catalysis depends on E417, which acts as the Nucleophile. N425 carries an N-linked (GlcNAc...) asparagine glycan. A beta-D-glucoside is bound by residues W466, 473–474 (EW), and F482.

Belongs to the glycosyl hydrolase 1 family.

It is found in the secreted. The catalysed reaction is Hydrolysis of terminal, non-reducing beta-D-glucosyl residues with release of beta-D-glucose.. In terms of biological role, hydrolyzes p-nitrophenyl beta-D-glucoside, p-nitrophenyl beta-D-galactoside, p-nitrophenyl beta-D-xyloside, p-nitrophenyl beta-D-fucoside, p-nitrophenyl beta-L-arabinoside, cello-oligosaccharides and laminaribiose. The chain is Beta-glucosidase 12 from Oryza sativa subsp. japonica (Rice).